The primary structure comprises 116 residues: Aspartate 1-decarboxylase (116 aa).

Residue Ser25 is the Schiff-base intermediate with substrate; via pyruvic acid of the active site. Pyruvic acid (Ser) is present on Ser25. Substrate is bound at residue Thr57. Tyr58 (proton donor) is an active-site residue. 73–75 (GAA) contacts substrate.

This sequence belongs to the PanD family. As to quaternary structure, heterooctamer of four alpha and four beta subunits. Pyruvate is required as a cofactor. In terms of processing, is synthesized initially as an inactive proenzyme, which is activated by self-cleavage at a specific serine bond to produce a beta-subunit with a hydroxyl group at its C-terminus and an alpha-subunit with a pyruvoyl group at its N-terminus.

The protein localises to the cytoplasm. The catalysed reaction is L-aspartate + H(+) = beta-alanine + CO2. It participates in cofactor biosynthesis; (R)-pantothenate biosynthesis; beta-alanine from L-aspartate: step 1/1. In terms of biological role, catalyzes the pyruvoyl-dependent decarboxylation of aspartate to produce beta-alanine. The protein is Aspartate 1-decarboxylase of Parabacteroides distasonis (strain ATCC 8503 / DSM 20701 / CIP 104284 / JCM 5825 / NCTC 11152).